A 619-amino-acid chain; its full sequence is UPF0329 protein ECU01_0100/ECU01_1510/ECU08_0030 (619 aa).

The span at 350–384 (REEREKREKREKREESKGRGKRGAGEAKEESKEED) shows a compositional bias: basic and acidic residues. A disordered region spans residues 350-428 (REEREKREKR…GKRKGDGHHY (79 aa)). A compositionally biased stretch (acidic residues) spans 385–399 (GKEEEGVEAEEEESA). The span at 411 to 428 (ARRKKSLKGKRKGDGHHY) shows a compositional bias: basic residues.

Belongs to the UPF0329 family.

The polypeptide is UPF0329 protein ECU01_0100/ECU01_1510/ECU08_0030 (Encephalitozoon cuniculi (strain GB-M1) (Microsporidian parasite)).